The sequence spans 601 residues: Elongation factor 4 (601 aa).

In terms of domain architecture, tr-type G spans 4-186; the sequence is SFIRNFAIIA…SIVHLVPPPK (183 aa). GTP is bound by residues 16 to 21 and 133 to 136; these read DHGKST and NKID.

The protein belongs to the TRAFAC class translation factor GTPase superfamily. Classic translation factor GTPase family. LepA subfamily.

Its subcellular location is the cell inner membrane. The enzyme catalyses GTP + H2O = GDP + phosphate + H(+). In terms of biological role, required for accurate and efficient protein synthesis under certain stress conditions. May act as a fidelity factor of the translation reaction, by catalyzing a one-codon backward translocation of tRNAs on improperly translocated ribosomes. Back-translocation proceeds from a post-translocation (POST) complex to a pre-translocation (PRE) complex, thus giving elongation factor G a second chance to translocate the tRNAs correctly. Binds to ribosomes in a GTP-dependent manner. This chain is Elongation factor 4, found in Koribacter versatilis (strain Ellin345).